A 394-amino-acid chain; its full sequence is Elongation factor Tu (394 aa).

A tr-type G domain is found at 10–204 (KPHINVGTIG…AMDNYIPIPE (195 aa)). The interval 19–26 (GHVDHGKT) is G1. 19–26 (GHVDHGKT) lines the GTP pocket. Threonine 26 lines the Mg(2+) pocket. The segment at 60–64 (GITIN) is G2. Positions 81-84 (DCPG) are G3. Residues 81–85 (DCPGH) and 136–139 (NKVD) each bind GTP. Residues 136–139 (NKVD) are G4. The interval 174 to 176 (SAL) is G5.

This sequence belongs to the TRAFAC class translation factor GTPase superfamily. Classic translation factor GTPase family. EF-Tu/EF-1A subfamily. Monomer.

It is found in the cytoplasm. The enzyme catalyses GTP + H2O = GDP + phosphate + H(+). GTP hydrolase that promotes the GTP-dependent binding of aminoacyl-tRNA to the A-site of ribosomes during protein biosynthesis. The polypeptide is Elongation factor Tu (Methylacidiphilum infernorum (isolate V4) (Methylokorus infernorum (strain V4))).